Here is a 503-residue protein sequence, read N- to C-terminus: Probable cytosol aminopeptidase (503 aa).

K270 and D275 together coordinate Mn(2+). Residue K282 is part of the active site. Mn(2+)-binding residues include D293, D352, and E354. R356 is a catalytic residue.

Belongs to the peptidase M17 family. Mn(2+) serves as cofactor.

The protein resides in the cytoplasm. It carries out the reaction Release of an N-terminal amino acid, Xaa-|-Yaa-, in which Xaa is preferably Leu, but may be other amino acids including Pro although not Arg or Lys, and Yaa may be Pro. Amino acid amides and methyl esters are also readily hydrolyzed, but rates on arylamides are exceedingly low.. The enzyme catalyses Release of an N-terminal amino acid, preferentially leucine, but not glutamic or aspartic acids.. Functionally, presumably involved in the processing and regular turnover of intracellular proteins. Catalyzes the removal of unsubstituted N-terminal amino acids from various peptides. This Shigella flexneri protein is Probable cytosol aminopeptidase.